Reading from the N-terminus, the 473-residue chain is Adenosylhomocysteinase (473 aa).

Residues Thr-64, Asp-139, and Glu-199 each coordinate substrate. 200–202 (TTT) is an NAD(+) binding site. Substrate contacts are provided by Lys-229 and Asp-233. NAD(+)-binding positions include Asn-234, 263-268 (GYGDVG), Glu-286, Asn-321, 342-344 (IGH), and Asn-387.

Belongs to the adenosylhomocysteinase family. NAD(+) serves as cofactor.

Its subcellular location is the cytoplasm. It carries out the reaction S-adenosyl-L-homocysteine + H2O = L-homocysteine + adenosine. Its pathway is amino-acid biosynthesis; L-homocysteine biosynthesis; L-homocysteine from S-adenosyl-L-homocysteine: step 1/1. Its function is as follows. May play a key role in the regulation of the intracellular concentration of adenosylhomocysteine. The sequence is that of Adenosylhomocysteinase from Paraburkholderia phytofirmans (strain DSM 17436 / LMG 22146 / PsJN) (Burkholderia phytofirmans).